A 353-amino-acid polypeptide reads, in one-letter code: C-X-C chemokine receptor type 4 (353 aa).

An important for chemokine binding and signaling region spans residues 1 to 22 (MEELHIYPSDNYTEEDLGSGDY). At 1–39 (MEELHIYPSDNYTEEDLGSGDYDSMKEPCFREENAHFNR) the chain is on the extracellular side. Residue Tyr7 is modified to Sulfotyrosine. Residue Asn11 is glycosylated (N-linked (GlcNAc...) asparagine). At Tyr12 the chain carries Sulfotyrosine. A glycan (O-linked (Xyl...) (chondroitin sulfate) serine) is linked at Ser19. At Tyr22 the chain carries Sulfotyrosine. 2 disulfide bridges follow: Cys29–Cys275 and Cys110–Cys187. Residues 40–64 (IFLPTVYSIIFLTGIVGNGLVILVM) traverse the membrane as a helical segment. The Cytoplasmic portion of the chain corresponds to 65 to 78 (GYQKKLRSMTDKYR). The chain crosses the membrane as a helical span at residues 79–100 (LHLSVADLLFVLTLPFWAVEAV). The interval 95 to 98 (WAVE) is chemokine binding. At 101–111 (ANWYFGNFLCK) the chain is on the extracellular side. The chain crosses the membrane as a helical span at residues 112–131 (AVHVIYTVNLYSSVLILAFI). The chemokine binding stretch occupies residues 114 to 118 (HVIYT). At 132 to 155 (SLDRYLAIVHATNSQRPRKLLAEK) the chain is on the cytoplasmic side. The Important for signaling signature appears at 134 to 136 (DRY). The segment at 136–148 (YLAIVHATNSQRP) is involved in dimerization; when bound to chemokine. The helical transmembrane segment at 156-175 (VVYVGVWIPALLLTIPDFIF) threads the bilayer. Over 176–196 (ANVREADDRYICDRFYPNDSW) the chain is Extracellular. The chemokine binding, important for signaling stretch occupies residues 187–191 (CDRFY). The interval 192-211 (PNDSWLVVFQFQHIMVGLIL) is involved in dimerization. Residues 197–217 (LVVFQFQHIMVGLILPGIVIL) form a helical membrane-spanning segment. Residues 218-242 (SCYCIIISKLSHSKGYQKRKALKTT) lie on the Cytoplasmic side of the membrane. The helical transmembrane segment at 243–262 (VILILAFFACWLPYYIGISI) threads the bilayer. Residues 263–283 (DSFILLEIIKQGCEFEKTVHK) lie on the Extracellular side of the membrane. The segment at 267–269 (LLE) is involved in dimerization. Residues 284-303 (WISITEALAFFHCCLNPILY) traverse the membrane as a helical segment. At 304 to 353 (AFLGAKFKTSAQHALTSVSRGSSLKILSKGKRGGHSSVSTESESSSFHSS) the chain is on the cytoplasmic side. 2 positions are modified to phosphoserine: Ser320 and Ser322. Residues Ser325 and Ser326 each carry the phosphoserine; by PKC and GRK6 modification. Residues 330 to 353 (LSKGKRGGHSSVSTESESSSFHSS) form a disordered region. Ser331 bears the Phosphoserine; by GRK6 mark. Lys332 participates in a covalent cross-link: Glycyl lysine isopeptide (Lys-Gly) (interchain with G-Cter in ubiquitin). Positions 338–353 (HSSVSTESESSSFHSS) are enriched in low complexity. At Ser340 the chain carries Phosphoserine; by GRK6. A phosphoserine mark is found at Ser349 and Ser352.

This sequence belongs to the G-protein coupled receptor 1 family. As to quaternary structure, monomer. Can form homodimers. Interacts with CD164. Interacts with ARRB2; the interaction is dependent on the C-terminal phosphorylation of CXCR4 and allows activation of MAPK1 and MAPK3. Interacts with ARR3; the interaction is dependent on the C-terminal phosphorylation of CXCR4 and modulates calcium mobilization. Interacts with RNF113A; the interaction, enhanced by CXCL12, promotes CXCR4 ubiquitination and subsequent degradation. Interacts (via the cytoplasmic C-terminal) with ITCH (via the WW domains I and II); the interaction, enhanced by CXCL12, promotes CXCR4 ubiquitination and leads to its degradation. Interacts with extracellular ubiquitin. Interacts with DBN1; this interaction is enhanced by antigenic stimulation. Following LPS binding, may form a complex with GDF5, HSP90AA1 and HSPA8. In terms of processing, phosphorylated on agonist stimulation. Rapidly phosphorylated on serine and threonine residues in the C-terminal. Phosphorylation at Ser-325 and Ser-326 leads to recruitment of ITCH, ubiquitination and protein degradation. Ubiquitinated after ligand binding, leading to its degradation. Ubiquitinated by ITCH at the cell membrane on agonist stimulation. The ubiquitin-dependent mechanism, endosomal sorting complex required for transport (ESCRT), then targets CXCR4 for lysosomal degradation. This process is dependent also on prior Ser-/Thr-phosphorylation in the C-terminal of CXCR4. Also binding of ARRB1 to STAM negatively regulates CXCR4 sorting to lysosomes though modulating ubiquitination of SFR5S. Post-translationally, sulfation is required for efficient binding of CXCL12/SDF-1alpha and promotes its dimerization. In terms of processing, O- and N-glycosylated. N-glycosylation can mask coreceptor function. The O-glycosylation chondroitin sulfate attachment does not affect interaction with CXCL12/SDF-1alpha nor its coreceptor activity.

The protein localises to the cell membrane. It is found in the cell junction. It localises to the early endosome. The protein resides in the late endosome. Its subcellular location is the lysosome. Its function is as follows. Receptor for the C-X-C chemokine CXCL12/SDF-1 that transduces a signal by increasing intracellular calcium ion levels and enhancing MAPK1/MAPK3 activation. Involved in the AKT signaling cascade. Plays a role in regulation of cell migration, e.g. during wound healing. Acts as a receptor for extracellular ubiquitin; leading to enhanced intracellular calcium ions and reduced cellular cAMP levels. Binds bacterial lipopolysaccharide (LPS) et mediates LPS-induced inflammatory response, including TNF secretion by monocytes. Involved in hematopoiesis and in cardiac ventricular septum formation. Also plays an essential role in vascularization of the gastrointestinal tract, probably by regulating vascular branching and/or remodeling processes in endothelial cells. Involved in cerebellar development. In the CNS, could mediate hippocampal-neuron survival. This is C-X-C chemokine receptor type 4 (CXCR4) from Canis lupus familiaris (Dog).